A 274-amino-acid polypeptide reads, in one-letter code: 2-dehydro-3-deoxyphosphooctonate aldolase (274 aa).

This sequence belongs to the KdsA family.

The protein resides in the cytoplasm. It carries out the reaction D-arabinose 5-phosphate + phosphoenolpyruvate + H2O = 3-deoxy-alpha-D-manno-2-octulosonate-8-phosphate + phosphate. It participates in carbohydrate biosynthesis; 3-deoxy-D-manno-octulosonate biosynthesis; 3-deoxy-D-manno-octulosonate from D-ribulose 5-phosphate: step 2/3. Its pathway is bacterial outer membrane biogenesis; lipopolysaccharide biosynthesis. The chain is 2-dehydro-3-deoxyphosphooctonate aldolase from Rickettsia felis (strain ATCC VR-1525 / URRWXCal2) (Rickettsia azadi).